The chain runs to 545 residues: CTP synthase (545 aa).

The tract at residues 1–266 is amidoligase domain; sequence MTTNYIFVTG…DDYICKRFSL (266 aa). S14 contacts CTP. S14 is a UTP binding site. ATP is bound by residues 15–20 and D72; that span reads SLGKGI. Mg(2+) is bound by residues D72 and E140. CTP-binding positions include 147 to 149, 187 to 192, and K223; these read DIE and KTKPTQ. UTP-binding positions include 187–192 and K223; that span reads KTKPTQ. 239–241 lines the ATP pocket; sequence KDV. Residues 291–542 form the Glutamine amidotransferase type-1 domain; it reads TIGMVGKYIE…VKAASEYQKR (252 aa). G352 lines the L-glutamine pocket. C379 (nucleophile; for glutamine hydrolysis) is an active-site residue. L-glutamine is bound by residues 380 to 383, E403, and R470; that span reads LGMQ. Residues H515 and E517 contribute to the active site.

The protein belongs to the CTP synthase family. Homotetramer.

It catalyses the reaction UTP + L-glutamine + ATP + H2O = CTP + L-glutamate + ADP + phosphate + 2 H(+). It carries out the reaction L-glutamine + H2O = L-glutamate + NH4(+). The catalysed reaction is UTP + NH4(+) + ATP = CTP + ADP + phosphate + 2 H(+). The protein operates within pyrimidine metabolism; CTP biosynthesis via de novo pathway; CTP from UDP: step 2/2. With respect to regulation, allosterically activated by GTP, when glutamine is the substrate; GTP has no effect on the reaction when ammonia is the substrate. The allosteric effector GTP functions by stabilizing the protein conformation that binds the tetrahedral intermediate(s) formed during glutamine hydrolysis. Inhibited by the product CTP, via allosteric rather than competitive inhibition. Catalyzes the ATP-dependent amination of UTP to CTP with either L-glutamine or ammonia as the source of nitrogen. Regulates intracellular CTP levels through interactions with the four ribonucleotide triphosphates. This chain is CTP synthase, found in Enterobacter sp. (strain 638).